A 369-amino-acid polypeptide reads, in one-letter code: Queuine tRNA-ribosyltransferase (369 aa).

Aspartate 89 acts as the Proton acceptor in catalysis. Substrate-binding positions include 89–93 (DSGGF), aspartate 142, glutamine 184, and glycine 211. Positions 242-248 (GGGSPEL) are RNA binding. Aspartate 261 functions as the Nucleophile in the catalytic mechanism. The interval 266–270 (TRIAR) is RNA binding; important for wobble base 34 recognition. Zn(2+) is bound by residues cysteine 299, cysteine 301, cysteine 304, and histidine 330.

The protein belongs to the queuine tRNA-ribosyltransferase family. In terms of assembly, homodimer. Within each dimer, one monomer is responsible for RNA recognition and catalysis, while the other monomer binds to the replacement base PreQ1. It depends on Zn(2+) as a cofactor.

The enzyme catalyses 7-aminomethyl-7-carbaguanine + guanosine(34) in tRNA = 7-aminomethyl-7-carbaguanosine(34) in tRNA + guanine. Its pathway is tRNA modification; tRNA-queuosine biosynthesis. In terms of biological role, catalyzes the base-exchange of a guanine (G) residue with the queuine precursor 7-aminomethyl-7-deazaguanine (PreQ1) at position 34 (anticodon wobble position) in tRNAs with GU(N) anticodons (tRNA-Asp, -Asn, -His and -Tyr). Catalysis occurs through a double-displacement mechanism. The nucleophile active site attacks the C1' of nucleotide 34 to detach the guanine base from the RNA, forming a covalent enzyme-RNA intermediate. The proton acceptor active site deprotonates the incoming PreQ1, allowing a nucleophilic attack on the C1' of the ribose to form the product. After dissociation, two additional enzymatic reactions on the tRNA convert PreQ1 to queuine (Q), resulting in the hypermodified nucleoside queuosine (7-(((4,5-cis-dihydroxy-2-cyclopenten-1-yl)amino)methyl)-7-deazaguanosine). This is Queuine tRNA-ribosyltransferase from Thermotoga neapolitana (strain ATCC 49049 / DSM 4359 / NBRC 107923 / NS-E).